A 77-amino-acid polypeptide reads, in one-letter code: ATP synthase subunit c (77 aa).

2 helical membrane-spanning segments follow: residues 10–30 (IAVALLIGFGAIGTAVGFGNM) and 57–77 (GLIDAVAMIGVGIAMVLLFVL).

It belongs to the ATPase C chain family. F-type ATPases have 2 components, F(1) - the catalytic core - and F(0) - the membrane proton channel. F(1) has five subunits: alpha(3), beta(3), gamma(1), delta(1), epsilon(1). F(0) has three main subunits: a(1), b(2) and c(10-14). The alpha and beta chains form an alternating ring which encloses part of the gamma chain. F(1) is attached to F(0) by a central stalk formed by the gamma and epsilon chains, while a peripheral stalk is formed by the delta and b chains.

The protein resides in the cell inner membrane. In terms of biological role, f(1)F(0) ATP synthase produces ATP from ADP in the presence of a proton or sodium gradient. F-type ATPases consist of two structural domains, F(1) containing the extramembraneous catalytic core and F(0) containing the membrane proton channel, linked together by a central stalk and a peripheral stalk. During catalysis, ATP synthesis in the catalytic domain of F(1) is coupled via a rotary mechanism of the central stalk subunits to proton translocation. Its function is as follows. Key component of the F(0) channel; it plays a direct role in translocation across the membrane. A homomeric c-ring of between 10-14 subunits forms the central stalk rotor element with the F(1) delta and epsilon subunits. This Pseudoalteromonas translucida (strain TAC 125) protein is ATP synthase subunit c.